The following is a 417-amino-acid chain: Carboxypeptidase A2 (417 aa).

A signal peptide spans 1–16 (MRLTPLLVALFGYIYC). Residues 17-112 (QETFVGDQVL…EMLFNQQRER (96 aa)) constitute a propeptide, activation peptide. A Peptidase M14 domain is found at 120-412 (AYHTLEEIYQ…LGLKTIMEHV (293 aa)). The Zn(2+) site is built by H177 and E180. Residues 177 to 180 (HARE), R235, and 252 to 253 (NR) contribute to the substrate site. A disulfide bridge connects residues C246 and C269. H304 serves as a coordination point for Zn(2+). 305–306 (SY) contributes to the substrate binding site. C318 and C352 form a disulfide bridge. Y356 provides a ligand contact to substrate. E378 serves as the catalytic Proton donor/acceptor.

This sequence belongs to the peptidase M14 family. Zn(2+) is required as a cofactor.

It is found in the secreted. It catalyses the reaction Similar to that of carboxypeptidase A (EC 3.4.17.1), but with a preference for bulkier C-terminal residues.. Carboxypeptidase that catalyzes the release of a C-terminal amino acid, with a preference for large aromatic C-terminal residues. The polypeptide is Carboxypeptidase A2 (Cpa2) (Mus musculus (Mouse)).